A 275-amino-acid chain; its full sequence is Myb/SANT-like DNA-binding domain-containing protein 3 (275 aa).

Positions 13–78 (FSELEKSILL…QLKKCWENIK (66 aa)) constitute a Myb-like domain. A phosphoserine mark is found at serine 96 and serine 98. Residue lysine 154 forms a Glycyl lysine isopeptide (Lys-Gly) (interchain with G-Cter in SUMO2) linkage. The stretch at 211–247 (QLIQMNEVHVAKIQQIERECEMAEEEHRIKMEVLNKK) forms a coiled coil. Residue serine 274 is modified to Phosphoserine.

The protein belongs to the MSANTD3 family. Expressed in brain.

This is Myb/SANT-like DNA-binding domain-containing protein 3 (MSANTD3) from Homo sapiens (Human).